A 382-amino-acid polypeptide reads, in one-letter code: MRAVCLMLTALLMLEYVCRSDTMSTCKSLDLELVKRKRIEAIRGQILSKLRLPKEPEIDQEGDTEEVPASLMSIYNSTVELSEEQVHTYIPSTQDAEEEAYFAKEVHKFNMKQSENTSKHQILFNMSEMRSVLGTDRLLSQAELRLLIKNHGLLDDSEQRLELYRGVGDKARYLKSHFVSKEWANRWVSFDVTQTLNEWLQGAGEEQGFQLKLPCDCGKPMEEFRFKISGMNKLRGNTETLAMKMPSKPHILLMSLPVERHSQLSSRKKRQTTTEEICSDKSESCCVRKLYIDFRKDLGWKWIHEPTGYFANYCIGPCTYIWNTENKYSQVLALYKHHNPGASAQPCCVPQVLEPLPIIYYVGRQHKVEQLSNMIVKSCRCS.

The first 20 residues, 1-20 (MRAVCLMLTALLMLEYVCRS), serve as a signal peptide directing secretion. The interval 23–68 (MSTCKSLDLELVKRKRIEAIRGQILSKLRLPKEPEIDQEGDTEEVP) is straightjacket domain. An arm domain region spans residues 69–264 (ASLMSIYNST…SLPVERHSQL (196 aa)). Residues N76, N116, and N125 are each glycosylated (N-linked (GlcNAc...) asparagine). The tract at residues 218 to 243 (GKPMEEFRFKISGMNKLRGNTETLAM) is bowtie tail. The short motif at 235–237 (RGN) is the Cell attachment site element. 4 disulfides stabilise this stretch: C278/C286, C285/C348, C314/C379, and C318/C381.

This sequence belongs to the TGF-beta family. Latency-associated peptide: Homodimer; disulfide-linked. Latency-associated peptide: Interacts with Transforming growth factor beta-1 (TGF-beta-1) chain; interaction is non-covalent and maintains (TGF-beta-1) in a latent state; each Latency-associated peptide (LAP) monomer interacts with TGF-beta-1 in the other monomer. Transforming growth factor beta-1: Homodimer; disulfide-linked. Transforming growth factor beta-1: Interacts with TGF-beta receptors (tgfbr1 and tgfbr2), leading to signal transduction. Interacts with EFEMP2. In terms of processing, transforming growth factor beta-1 proprotein: The precursor proprotein is cleaved in the Golgi apparatus to form Transforming growth factor beta-1 (TGF-beta-1) and Latency-associated peptide (LAP) chains, which remain non-covalently linked, rendering TGF-beta-1 inactive. Expressed in blood leukocytes, kidney macrophages, brain, gill and spleen but not in liver.

The protein resides in the secreted. It is found in the extracellular space. Its subcellular location is the extracellular matrix. In terms of biological role, transforming growth factor beta-1 proprotein: Precursor of the Latency-associated peptide (LAP) and Transforming growth factor beta-1 (TGF-beta-1) chains, which constitute the regulatory and active subunit of TGF-beta-1, respectively. Functionally, required to maintain the Transforming growth factor beta-1 (TGF-beta-1) chain in a latent state during storage in extracellular matrix. Associates non-covalently with TGF-beta-1 and regulates its activation via interaction with 'milieu molecules', such as LTBP1, LRRC32/GARP and LRRC33/NRROS, that control activation of TGF-beta-1. Interaction with integrins (ITGAV:ITGB6 or ITGAV:ITGB8) results in distortion of the Latency-associated peptide chain and subsequent release of the active TGF-beta-1. Transforming growth factor beta-1: Multifunctional protein that regulates the growth and differentiation of various cell types and is involved in various processes, such as normal development, immune function, microglia function and responses to neurodegeneration. Activation into mature form follows different steps: following cleavage of the proprotein in the Golgi apparatus, Latency-associated peptide (LAP) and Transforming growth factor beta-1 (TGF-beta-1) chains remain non-covalently linked rendering TGF-beta-1 inactive during storage in extracellular matrix. At the same time, LAP chain interacts with 'milieu molecules', such as ltbp1, lrrc32/garp and lrrc33/nrros that control activation of TGF-beta-1 and maintain it in a latent state during storage in extracellular milieus. TGF-beta-1 is released from LAP by integrins (ITGAV:ITGB6 or ITGAV:ITGB8): integrin-binding to LAP stabilizes an alternative conformation of the LAP bowtie tail and results in distortion of the LAP chain and subsequent release of the active TGF-beta-1. Once activated following release of LAP, TGF-beta-1 acts by binding to TGF-beta receptors (tgfbr1 and tgfbr2), which transduce signal. While expressed by many cells types, TGF-beta-1 only has a very localized range of action within cell environment thanks to fine regulation of its activation by Latency-associated peptide chain (LAP) and 'milieu molecules'. Plays an important role in bone remodeling: acts as a potent stimulator of osteoblastic bone formation. Can promote either T-helper 17 cells (Th17) or regulatory T-cells (Treg) lineage differentiation in a concentration-dependent manner. Can induce epithelial-to-mesenchymal transition (EMT) and cell migration in various cell types. The protein is Transforming growth factor beta-1 proprotein (tgfb1) of Oncorhynchus mykiss (Rainbow trout).